A 314-amino-acid polypeptide reads, in one-letter code: 2,3-dihydroxyphenylpropionate/2,3-dihydroxicinnamic acid 1,2-dioxygenase (314 aa).

Histidine 115 serves as the catalytic Proton donor. Histidine 179 (proton acceptor) is an active-site residue.

The protein belongs to the LigB/MhpB extradiol dioxygenase family. In terms of assembly, homotetramer. Requires Fe(2+) as cofactor.

It catalyses the reaction 3-(2,3-dihydroxyphenyl)propanoate + O2 = (2Z,4E)-2-hydroxy-6-oxonona-2,4-dienedioate + H(+). The enzyme catalyses (2E)-3-(2,3-dihydroxyphenyl)prop-2-enoate + O2 = (2Z,4E,7E)-2-hydroxy-6-oxonona-2,4,7-trienedioate + H(+). Its pathway is aromatic compound metabolism; 3-phenylpropanoate degradation. In terms of biological role, catalyzes the non-heme iron(II)-dependent oxidative cleavage of 2,3-dihydroxyphenylpropionic acid and 2,3-dihydroxicinnamic acid into 2-hydroxy-6-ketononadienedioate and 2-hydroxy-6-ketononatrienedioate, respectively. In Klebsiella pneumoniae subsp. pneumoniae (strain ATCC 700721 / MGH 78578), this protein is 2,3-dihydroxyphenylpropionate/2,3-dihydroxicinnamic acid 1,2-dioxygenase.